Here is a 384-residue protein sequence, read N- to C-terminus: 5-cytosine rRNA methyltransferase NSUN4 (384 aa).

A mitochondrion-targeting transit peptide spans 1-25; sequence MAALVVRGVRDMLKRADFATVPRRQ. Positions 185, 186, 187, and 204 each coordinate S-adenosyl-L-methionine. A Phosphoserine modification is found at Ser206. Residues Arg209, Asp237, Gly238, and Asp255 each coordinate S-adenosyl-L-methionine. Cys310 acts as the Nucleophile in catalysis.

This sequence belongs to the class I-like SAM-binding methyltransferase superfamily. RsmB/NOP family. In terms of assembly, heterodimer with MTERFD2/MTERF4; this interaction seems to be required for NSUN4 recruitment to the mitochondrial large ribosomal subunit.

It localises to the mitochondrion. The catalysed reaction is a cytidine in rRNA + S-adenosyl-L-methionine = a 5-methylcytidine in rRNA + S-adenosyl-L-homocysteine + H(+). It carries out the reaction a cytidine in mRNA + S-adenosyl-L-methionine = a 5-methylcytidine in mRNA + S-adenosyl-L-homocysteine + H(+). Functionally, mitochondrial RNA cytosine C(5)-methyltransferase that methylates cytosine to 5-methylcytosine (m5C) in various RNAs, such as rRNAs, mRNAs and some long non-coding RNAs (lncRNAs). Involved in mitochondrial ribosome small subunit (SSU) maturation by catalyzing methylation of mitochondrial 12S rRNA; the function is independent of MTERFD2/MTERF4 and assembled mitochondrial ribosome large subunit (LSU). Targeted to LSU by MTERFD2/MTERF4 and probably is involved in a final step in ribosome biogenesis to ensure that SSU and LSU are assembled. In vitro can methylate 16S rRNA of the LSU; the methylation is enhanced by MTERFD/MTERF4. Also acts as a regulator of innate immunity by marking double-stranded mitochondrial RNAs(mt-dsRNAs) generated in response to stress: catalyzes m5C modification on mitochondrial RNAs, such as a mRNAs and lncRNAs, with a preference for the termini of light-strand lncRNAs, promoting their degradation and cytosolic release. Modified light-strand lncRNAs are then recognized by C1QBP reader and recruited to the mitochondrial degradosome complex, which promotes their degradation. In Bos taurus (Bovine), this protein is 5-cytosine rRNA methyltransferase NSUN4 (NSUN4).